The primary structure comprises 307 residues: Aquaporin Lacbi1:387054 (307 aa).

Over 1 to 40 (MSNAPLVHLSDLQKRLRVFAVWEKVRNDGKVHWAIECFAE) the chain is Cytoplasmic. A helical transmembrane segment spans residues 41-61 (MFGVFLYVYFGLGSTAGWVIG). Over 62 to 68 (NIIKETN) the chain is Extracellular. The helical transmembrane segment at 69–89 (LSSILQIGLAYAFGIWFAIGL) threads the bilayer. Residues 90–120 (CSSSSGGHFNPCVTLSFVVFKGFPKLKACRY) are Cytoplasmic-facing. An NPA 1 motif is present at residues 99 to 101 (NPC). The helical transmembrane segment at 121–141 (IIAQILGAYIASALVYSQWNV) threads the bilayer. Topologically, residues 142–157 (LIEECTLGLIKAKAYD) are extracellular. Residues 158–178 (TTMFTPNGPAGIFALYLVPGA) traverse the membrane as a helical segment. An NPA 2 motif is present at residues 167-169 (AGI). At 179–183 (QSVPR) the chain is on the cytoplasmic side. A helical membrane pass occupies residues 184–203 (ALLNEFVNSTLIGMIIWAAL). Residues 204 to 216 (DPTNMMVPPAMGP) lie on the Extracellular side of the membrane. The chain crosses the membrane as a helical span at residues 217 to 237 (LFISLAYAAVIWGFATPAVAL). The Cytoplasmic portion of the chain corresponds to 238 to 264 (NTARDLGARLFAMSIWGTKAAGSGYSA). Residues 265 to 285 (IACLINIPATLLGVFLYEVFF) form a helical membrane-spanning segment. Residues 286–307 (TDSDRGKLLPILNGKKLKHIFS) lie on the Extracellular side of the membrane.

Belongs to the MIP/aquaporin (TC 1.A.8) family.

It is found in the membrane. The enzyme catalyses H2O(in) = H2O(out). It carries out the reaction NH4(+)(in) = NH4(+)(out). It catalyses the reaction urea(in) = urea(out). The catalysed reaction is glycerol(in) = glycerol(out). Its function is as follows. Water channel required to facilitate the transport of water across membranes. In addition to water, also shows strong ammonium transport activity. Also enables low but statistically significant glycerol and urea permeability. May be involved in fungal nitrogen (ammonium) support of the plant host in symbiosis. The protein is Aquaporin Lacbi1:387054 of Laccaria bicolor (strain S238N-H82 / ATCC MYA-4686) (Bicoloured deceiver).